The chain runs to 265 residues: RNA polymerase sigma factor SigI2 (265 aa).

Residues 71–84 (DEFSVGLAAFNEAI) carry the Polymerase core binding motif. Positions 211 to 230 (KTELLKLLKINKKTIERNRT) form a DNA-binding region, H-T-H motif.

The protein belongs to the sigma-70 factor family. SigI subfamily. In terms of assembly, interacts with RsgI2.

The protein localises to the cytoplasm. With respect to regulation, negatively regulated by the anti-sigma-I factor RsgI2. Binding of the polysaccharide substrate to RsgI2 may lead to the release and activation of SigI2. Its function is as follows. Sigma factors are initiation factors that promote the attachment of RNA polymerase to specific initiation sites and are then released. This sigma factor is involved in regulation of cellulosomal genes via an external polysaccharide-sensing mechanism. In Acetivibrio thermocellus (strain ATCC 27405 / DSM 1237 / JCM 9322 / NBRC 103400 / NCIMB 10682 / NRRL B-4536 / VPI 7372) (Clostridium thermocellum), this protein is RNA polymerase sigma factor SigI2.